A 183-amino-acid polypeptide reads, in one-letter code: Lipid droplet coating protein Cap20 (183 aa).

It belongs to the perilipin family.

The protein resides in the lipid droplet. Lipid droplet coating protein that regulates lipid metabolism, appressorial turgor pressure, and virulence. Appressorial turgor pressure is important for the mechanical penetration of the host cuticle during infection. The sequence is that of Lipid droplet coating protein Cap20 (Cap20) from Colletotrichum gloeosporioides (Anthracnose fungus).